A 275-amino-acid polypeptide reads, in one-letter code: Myoblast determination protein 1 homolog 2 (275 aa).

A bHLH domain is found at 84 to 135 (DRRKAATMRERRRLGKVNDAFENLKRCTSNNPNQRLPKVEILRNAISYIESL). Polar residues predominate over residues 232–265 (SGQEGSEGSPCSPQEGSILSRNGGTVPSPTNCPQ). Positions 232–275 (SGQEGSEGSPCSPQEGSILSRNGGTVPSPTNCPQPSHDPIYQVL) are disordered.

In terms of assembly, efficient DNA binding requires dimerization with another bHLH protein.

The protein localises to the nucleus. May act as a transcriptional activator that promotes transcription of muscle-specific target genes and plays a role in muscle differentiation. The chain is Myoblast determination protein 1 homolog 2 (myod2) from Oncorhynchus mykiss (Rainbow trout).